Here is a 191-residue protein sequence, read N- to C-terminus: LOB domain-containing protein 19 (191 aa).

The 103-residue stretch at 15–117 (GPCGACKFLR…AELAHVQARL (103 aa)) folds into the LOB domain.

The protein belongs to the LOB domain-containing protein family. As to expression, expressed in shoots, roots and floral tissues, but not in stems or leaves.

The protein is LOB domain-containing protein 19 (LBD19) of Arabidopsis thaliana (Mouse-ear cress).